Consider the following 432-residue polypeptide: Enolase (432 aa).

Position 167 (Gln167) interacts with (2R)-2-phosphoglycerate. Glu209 serves as the catalytic Proton donor. Mg(2+) contacts are provided by Asp246, Glu291, and Asp318. Positions 343, 372, 373, and 394 each coordinate (2R)-2-phosphoglycerate. Lys343 serves as the catalytic Proton acceptor.

The protein belongs to the enolase family. As to quaternary structure, component of the RNA degradosome, a multiprotein complex involved in RNA processing and mRNA degradation. Mg(2+) is required as a cofactor.

Its subcellular location is the cytoplasm. The protein localises to the secreted. The protein resides in the cell surface. The catalysed reaction is (2R)-2-phosphoglycerate = phosphoenolpyruvate + H2O. Its pathway is carbohydrate degradation; glycolysis; pyruvate from D-glyceraldehyde 3-phosphate: step 4/5. In terms of biological role, catalyzes the reversible conversion of 2-phosphoglycerate (2-PG) into phosphoenolpyruvate (PEP). It is essential for the degradation of carbohydrates via glycolysis. The protein is Enolase of Buchnera aphidicola subsp. Cinara cedri (strain Cc).